Consider the following 419-residue polypeptide: 3-isopropylmalate dehydratase large subunit (419 aa).

[4Fe-4S] cluster contacts are provided by Cys300, Cys360, and Cys363.

This sequence belongs to the aconitase/IPM isomerase family. LeuC type 2 subfamily. In terms of assembly, heterodimer of LeuC and LeuD. [4Fe-4S] cluster is required as a cofactor.

It catalyses the reaction (2R,3S)-3-isopropylmalate = (2S)-2-isopropylmalate. The protein operates within amino-acid biosynthesis; L-leucine biosynthesis; L-leucine from 3-methyl-2-oxobutanoate: step 2/4. Catalyzes the isomerization between 2-isopropylmalate and 3-isopropylmalate, via the formation of 2-isopropylmaleate. This chain is 3-isopropylmalate dehydratase large subunit, found in Clostridium beijerinckii (strain ATCC 51743 / NCIMB 8052) (Clostridium acetobutylicum).